The following is a 378-amino-acid chain: Anhydro-N-acetylmuramic acid kinase (378 aa).

Position 9–16 (9–16) interacts with ATP; the sequence is GTSVDGID.

Belongs to the anhydro-N-acetylmuramic acid kinase family.

It catalyses the reaction 1,6-anhydro-N-acetyl-beta-muramate + ATP + H2O = N-acetyl-D-muramate 6-phosphate + ADP + H(+). It functions in the pathway amino-sugar metabolism; 1,6-anhydro-N-acetylmuramate degradation. Its pathway is cell wall biogenesis; peptidoglycan recycling. Its function is as follows. Catalyzes the specific phosphorylation of 1,6-anhydro-N-acetylmuramic acid (anhMurNAc) with the simultaneous cleavage of the 1,6-anhydro ring, generating MurNAc-6-P. Is required for the utilization of anhMurNAc either imported from the medium or derived from its own cell wall murein, and thus plays a role in cell wall recycling. This is Anhydro-N-acetylmuramic acid kinase from Microcystis aeruginosa (strain NIES-843 / IAM M-2473).